Reading from the N-terminus, the 486-residue chain is Membrane-bound lytic murein transglycosylase F (486 aa).

Residues 1 to 21 form the signal peptide; that stretch reads MKRLKINYILIGVVTLLLALA. A non-LT domain region spans residues 22–268; the sequence is LWPNITWRGG…RLEEKYLGHV (247 aa). Residues 269–486 are LT domain; the sequence is GSFDYVDTKT…AVTPELALNF (218 aa). Residue glutamate 313 is part of the active site.

It in the N-terminal section; belongs to the bacterial solute-binding protein 3 family. This sequence in the C-terminal section; belongs to the transglycosylase Slt family.

Its subcellular location is the cell outer membrane. It catalyses the reaction Exolytic cleavage of the (1-&gt;4)-beta-glycosidic linkage between N-acetylmuramic acid (MurNAc) and N-acetylglucosamine (GlcNAc) residues in peptidoglycan, from either the reducing or the non-reducing ends of the peptidoglycan chains, with concomitant formation of a 1,6-anhydrobond in the MurNAc residue.. Its function is as follows. Murein-degrading enzyme that degrades murein glycan strands and insoluble, high-molecular weight murein sacculi, with the concomitant formation of a 1,6-anhydromuramoyl product. Lytic transglycosylases (LTs) play an integral role in the metabolism of the peptidoglycan (PG) sacculus. Their lytic action creates space within the PG sacculus to allow for its expansion as well as for the insertion of various structures such as secretion systems and flagella. The polypeptide is Membrane-bound lytic murein transglycosylase F (Serratia proteamaculans (strain 568)).